The sequence spans 92 residues: Small ribosomal subunit protein uS19 (92 aa).

Belongs to the universal ribosomal protein uS19 family.

Its function is as follows. Protein S19 forms a complex with S13 that binds strongly to the 16S ribosomal RNA. The polypeptide is Small ribosomal subunit protein uS19 (rpsS) (Geobacillus stearothermophilus (Bacillus stearothermophilus)).